The sequence spans 377 residues: Copper-containing nitrite reductase (377 aa).

Positions 1–35 form a signal peptide, tat-type signal; the sequence is MTNTLQMTRRTMLTGAAVAGALTPILTSGGGNASP. Plastocyanin-like domains lie at 99-194 and 259-360; these read MTFD…IMVL and GAVG…FKVT. Residues His-132, His-137, His-172, Cys-173, His-182, Met-187, and His-343 each contribute to the Cu cation site.

Belongs to the multicopper oxidase family. Homotrimer. Cu(2+) serves as cofactor. The cofactor is Cu(+). FAD is required as a cofactor. In terms of processing, predicted to be exported by the Tat system. The position of the signal peptide cleavage has not been experimentally proven.

The protein resides in the periplasm. It catalyses the reaction nitric oxide + Fe(III)-[cytochrome c] + H2O = Fe(II)-[cytochrome c] + nitrite + 2 H(+). It functions in the pathway nitrogen metabolism; nitrate reduction (denitrification); dinitrogen from nitrate: step 2/4. The chain is Copper-containing nitrite reductase (nirK) from Rhizobium sullae (Rhizobium hedysari).